The chain runs to 521 residues: DEAD-box ATP-dependent RNA helicase 12 (521 aa).

Residues 1–97 (MHHPRARYPP…QQWLRRDQAT (97 aa)) form a disordered region. Positions 13–50 (TSGGGGGGGGGGGGGRGNGGGGFGGGGGGGGGNHGYYG) are enriched in gly residues. The segment covering 51-89 (RGPQPQPQQQHYHHQAQQLHQHQQQQQHAQRNSSSQQQQ) has biased composition (low complexity). Residues 147 to 175 (NEFEDYFLKRELLMGIYEKGFERPSPIQE) carry the Q motif motif. The Helicase ATP-binding domain occupies 178-348 (IPIALTGSDI…EKYLPRPYVI (171 aa)). 191 to 198 (AKNGTGKT) lines the ATP pocket. The short motif at 296 to 299 (DEAD) is the DEAD box element. The region spanning 358-518 (GITQYYAFVE…TIPPQIDLAV (161 aa)) is the Helicase C-terminal domain.

It belongs to the DEAD box helicase family. DDX6/DHH1 subfamily.

It is found in the cytoplasm. The protein localises to the P-body. The catalysed reaction is ATP + H2O = ADP + phosphate + H(+). ATP-dependent RNA helicase involved in mRNA turnover, and more specifically in mRNA decapping. This is DEAD-box ATP-dependent RNA helicase 12 from Oryza sativa subsp. japonica (Rice).